The following is a 556-amino-acid chain: 2-isopropylmalate synthase (556 aa).

A Pyruvate carboxyltransferase domain is found at 33–307; sequence PIWCSSDLRD…DPELDFSDID (275 aa). The Mg(2+) site is built by D42, H246, H248, and N282. The interval 439–556 is regulatory domain; that stretch reads ANTPYALISH…SLSQTQAKAA (118 aa).

It belongs to the alpha-IPM synthase/homocitrate synthase family. LeuA type 2 subfamily. Homodimer. Mg(2+) serves as cofactor.

The protein resides in the cytoplasm. It carries out the reaction 3-methyl-2-oxobutanoate + acetyl-CoA + H2O = (2S)-2-isopropylmalate + CoA + H(+). It functions in the pathway amino-acid biosynthesis; L-leucine biosynthesis; L-leucine from 3-methyl-2-oxobutanoate: step 1/4. Catalyzes the condensation of the acetyl group of acetyl-CoA with 3-methyl-2-oxobutanoate (2-ketoisovalerate) to form 3-carboxy-3-hydroxy-4-methylpentanoate (2-isopropylmalate). This Pseudomonas savastanoi pv. phaseolicola (strain 1448A / Race 6) (Pseudomonas syringae pv. phaseolicola (strain 1448A / Race 6)) protein is 2-isopropylmalate synthase.